The chain runs to 497 residues: MNDVWQSDWSMMAPEWIVLAAAIALLVMDLALPSDRSRRPLAWGAAAAAALAMIATAAMIPAGSASILHDTFRLDAFAKAFKFILLAGGALALLLVAEWAPKEGSPHRGEFVYMMLFALLGAMMMASSGDLLTLFVSLELLSVSSYILAGLRKTAPASNEAALKYVINGGIATAIMLFGMSYVFGLTGTTNLGGIARRLQETNEPYMLALAFLLLLIGVSFKLATVPFHMWAPDVYEGAPVPATAFFAVVSKTAGFALLLRLLVTIFAAAPSEGRDPSSLLLSMQPIITVLAGLTMIIGSVVALRQRSLKRLLAYSGIAHAGYLLAGFAAMSWAMIDSLWMYLLVYTLMNIGAFAIIAHIVNETGSDDLDGLAGLYRHRPFLAAALGLFLLSLAGIPGTAGFIAKLHIFIGLVVTEPGHYVLAAVMAITTVISYVYYFNLIVQLFFRPTFTAPLGRLPAGLSTAVVLCALGTLAIGWAPGLAYDMLAQFGHFGDFLP.

The next 13 membrane-spanning stretches (helical) occupy residues 12 to 32, 40 to 60, 80 to 100, 116 to 136, 166 to 186, 208 to 228, 240 to 260, 284 to 304, 316 to 336, 341 to 361, 383 to 403, 430 to 450, and 457 to 477; these read MAPE…DLAL, PLAW…AAMI, AFKF…AEWA, LFAL…TLFV, VING…VFGL, LALA…TVPF, PVPA…ALLL, MQPI…VVAL, SGIA…WAMI, MYLL…AHIV, AAAL…AGFI, TVIS…RPTF, and LPAG…AIGW.

It belongs to the complex I subunit 2 family. As to quaternary structure, NDH-1 is composed of 14 different subunits. Subunits NuoA, H, J, K, L, M, N constitute the membrane sector of the complex.

The protein localises to the cell membrane. It carries out the reaction a quinone + NADH + 5 H(+)(in) = a quinol + NAD(+) + 4 H(+)(out). In terms of biological role, NDH-1 shuttles electrons from NADH, via FMN and iron-sulfur (Fe-S) centers, to quinones in the respiratory chain. The immediate electron acceptor for the enzyme in this species is believed to be a menaquinone. Couples the redox reaction to proton translocation (for every two electrons transferred, four hydrogen ions are translocated across the cytoplasmic membrane), and thus conserves the redox energy in a proton gradient. The chain is NADH-quinone oxidoreductase subunit N from Geobacillus kaustophilus (strain HTA426).